Consider the following 278-residue polypeptide: Imidazole glycerol phosphate synthase subunit HisF (278 aa).

Catalysis depends on residues Asp11 and Asp130.

This sequence belongs to the HisA/HisF family. Heterodimer of HisH and HisF.

It is found in the cytoplasm. It catalyses the reaction 5-[(5-phospho-1-deoxy-D-ribulos-1-ylimino)methylamino]-1-(5-phospho-beta-D-ribosyl)imidazole-4-carboxamide + L-glutamine = D-erythro-1-(imidazol-4-yl)glycerol 3-phosphate + 5-amino-1-(5-phospho-beta-D-ribosyl)imidazole-4-carboxamide + L-glutamate + H(+). It participates in amino-acid biosynthesis; L-histidine biosynthesis; L-histidine from 5-phospho-alpha-D-ribose 1-diphosphate: step 5/9. IGPS catalyzes the conversion of PRFAR and glutamine to IGP, AICAR and glutamate. The HisF subunit catalyzes the cyclization activity that produces IGP and AICAR from PRFAR using the ammonia provided by the HisH subunit. This chain is Imidazole glycerol phosphate synthase subunit HisF, found in Thermodesulfovibrio yellowstonii (strain ATCC 51303 / DSM 11347 / YP87).